Here is a 248-residue protein sequence, read N- to C-terminus: 1-(5-phosphoribosyl)-5-[(5-phosphoribosylamino)methylideneamino] imidazole-4-carboxamide isomerase (248 aa).

Asp-11 (proton acceptor) is an active-site residue. Residue Asp-132 is the Proton donor of the active site.

It belongs to the HisA/HisF family.

The protein localises to the cytoplasm. It catalyses the reaction 1-(5-phospho-beta-D-ribosyl)-5-[(5-phospho-beta-D-ribosylamino)methylideneamino]imidazole-4-carboxamide = 5-[(5-phospho-1-deoxy-D-ribulos-1-ylimino)methylamino]-1-(5-phospho-beta-D-ribosyl)imidazole-4-carboxamide. The protein operates within amino-acid biosynthesis; L-histidine biosynthesis; L-histidine from 5-phospho-alpha-D-ribose 1-diphosphate: step 4/9. The chain is 1-(5-phosphoribosyl)-5-[(5-phosphoribosylamino)methylideneamino] imidazole-4-carboxamide isomerase from Bradyrhizobium diazoefficiens (strain JCM 10833 / BCRC 13528 / IAM 13628 / NBRC 14792 / USDA 110).